Consider the following 327-residue polypeptide: Phenylalanine--tRNA ligase alpha subunit (327 aa).

E252 is a Mg(2+) binding site.

The protein belongs to the class-II aminoacyl-tRNA synthetase family. Phe-tRNA synthetase alpha subunit type 1 subfamily. In terms of assembly, tetramer of two alpha and two beta subunits. The cofactor is Mg(2+).

The protein localises to the cytoplasm. It carries out the reaction tRNA(Phe) + L-phenylalanine + ATP = L-phenylalanyl-tRNA(Phe) + AMP + diphosphate + H(+). In Shigella sonnei (strain Ss046), this protein is Phenylalanine--tRNA ligase alpha subunit.